Here is a 109-residue protein sequence, read N- to C-terminus: Tyrosine-protein phosphatase 16 (109 aa).

The region spanning 1–109 (WRMVTEHTST…RIKTQKPIVV (109 aa)) is the Tyrosine-protein phosphatase domain. D81 provides a ligand contact to substrate.

It belongs to the protein-tyrosine phosphatase family.

The enzyme catalyses O-phospho-L-tyrosyl-[protein] + H2O = L-tyrosyl-[protein] + phosphate. This chain is Tyrosine-protein phosphatase 16 (STY-16), found in Styela plicata (Wrinkled sea squirt).